Reading from the N-terminus, the 473-residue chain is Gamma-aminobutyric acid receptor subunit beta-3 (473 aa).

A signal peptide spans 1-25 (MWGLAGGRLFGIFSAPVLVAVVCCA). At 26–246 (QSVNDPGNMS…FRLKRNIGYF (221 aa)) the chain is on the extracellular side. 2 N-linked (GlcNAc...) asparagine glycosylation sites follow: asparagine 33 and asparagine 105. 120–122 (DTY) contributes to the benzamidine binding site. Tyrosine 122 is a binding site for 4-aminobutanoate. Residue tyrosine 122 coordinates histamine. A disulfide bridge links cysteine 161 with cysteine 175. Asparagine 174 carries N-linked (GlcNAc...) asparagine glycosylation. Residues glutamate 180 and tyrosine 182 each coordinate 4-aminobutanoate. Benzamidine is bound by residues 180 to 182 (ESY) and phenylalanine 225. 181 to 182 (SY) lines the histamine pocket. Threonine 227 is a 4-aminobutanoate binding site. Threonine 227 serves as a coordination point for histamine. The helical transmembrane segment at 247–267 (ILQTYMPSILITILSWVSFWI) threads the bilayer. Residues 268 to 271 (NYDA) lie on the Cytoplasmic side of the membrane. A helical transmembrane segment spans residues 272 to 292 (SAARVALGITTVLTMTTINTH). At 293–304 (LRETLPKIPYVK) the chain is on the extracellular side. Residues 305–328 (AIDMYLMGCFVFVFLALLEYAFVN) form a helical membrane-spanning segment. The Cytoplasmic segment spans residues 329 to 447 (YIFFGRGPQR…KIPDLTDVNA (119 aa)). The helical transmembrane segment at 448–470 (IDRWSRIVFPFTFSLFNLVYWLY) threads the bilayer. Residues 471 to 473 (YVN) are Extracellular-facing.

The protein belongs to the ligand-gated ion channel (TC 1.A.9) family. Gamma-aminobutyric acid receptor (TC 1.A.9.5) subfamily. GABRB3 sub-subfamily. Heteropentamer, formed by a combination of alpha (GABRA1-6), beta (GABRB1-3), gamma (GABRG1-3), delta (GABRD), epsilon (GABRE), rho (GABRR1-3), pi (GABRP) and theta (GABRQ) chains, each subunit exhibiting distinct physiological and pharmacological properties. Can form functional homopentamers (in vitro). Interacts with UBQLN1. May interact with KIF21B. Identified in a complex of 720 kDa composed of LHFPL4, NLGN2, GABRA1, GABRB2, GABRG2 and GABRB3. Interacts with LHFPL4. Interacts with GIT1; this interaction is required for synaptic GABRB3 surface stability and inhibitory synapse strength.

The protein resides in the postsynaptic cell membrane. It localises to the cell membrane. Its subcellular location is the cytoplasmic vesicle membrane. It carries out the reaction chloride(in) = chloride(out). Potentiated by histamine. In terms of biological role, beta subunit of the heteropentameric ligand-gated chloride channel gated by gamma-aminobutyric acid (GABA), a major inhibitory neurotransmitter in the brain. GABA-gated chloride channels, also named GABA(A) receptors (GABAAR), consist of five subunits arranged around a central pore and contain GABA active binding site(s) located at the alpha and beta subunit interface(s). GABAARs containing beta-3/GABRB3 subunit are found at both synaptic and extrasynaptic sites. When activated by GABA, GABAARs selectively allow the flow of chloride anions across the cell membrane down their electrochemical gradient. Chloride influx into the postsynaptic neuron following GABAAR opening decreases the neuron ability to generate a new action potential, thereby reducing nerve transmission. GABAARs containing alpha-1 and beta-3 subunits exhibit synaptogenic activity; the gamma-2 subunit being necessary but not sufficient to induce rapid synaptic contacts formation. Extrasynaptic beta-3 receptors contribute to the tonic GABAergic inhibition. GABAARs containing alpha-1, beta-3 and epsilon subunits may also permit spontaneous chloride channel activity while preserving the structural information required for GABA-gated openings. Beta-containing GABAARs can simultaneously bind GABA and histamine where histamine binds at the interface of two neighboring beta subunits, which may be involved in the regulation of sleep and wakefulness. Plays an important role in somatosensation and in the production of antinociception. In Homo sapiens (Human), this protein is Gamma-aminobutyric acid receptor subunit beta-3.